The sequence spans 382 residues: Phosphatidylglycerol--prolipoprotein diacylglyceryl transferase (382 aa).

3 helical membrane passes run 18 to 38 (IQWY…MFVF), 53 to 73 (FFIF…SFVI), and 91 to 111 (LAIQ…FNFF). Arg-162 lines the a 1,2-diacyl-sn-glycero-3-phospho-(1'-sn-glycerol) pocket. Helical transmembrane passes span 213–233 (IPLF…IYFV), 243–263 (GTIG…LENF), 274–294 (ITTS…CQFI), and 302–322 (FWTY…TTLF).

It belongs to the Lgt family.

The protein localises to the cell membrane. It carries out the reaction L-cysteinyl-[prolipoprotein] + a 1,2-diacyl-sn-glycero-3-phospho-(1'-sn-glycerol) = an S-1,2-diacyl-sn-glyceryl-L-cysteinyl-[prolipoprotein] + sn-glycerol 1-phosphate + H(+). The protein operates within protein modification; lipoprotein biosynthesis (diacylglyceryl transfer). Catalyzes the transfer of the diacylglyceryl group from phosphatidylglycerol to the sulfhydryl group of the N-terminal cysteine of a prolipoprotein, the first step in the formation of mature lipoproteins. This chain is Phosphatidylglycerol--prolipoprotein diacylglyceryl transferase, found in Mycoplasma genitalium (strain ATCC 33530 / DSM 19775 / NCTC 10195 / G37) (Mycoplasmoides genitalium).